Here is a 341-residue protein sequence, read N- to C-terminus: Methionine import ATP-binding protein MetN 1 (341 aa).

Residues 2-241 (IEFRQVSKSF…PKTTIAQNFV (240 aa)) enclose the ABC transporter domain. 38–45 (GYSGAGKS) contacts ATP.

The protein belongs to the ABC transporter superfamily. Methionine importer (TC 3.A.1.24) family. As to quaternary structure, the complex is composed of two ATP-binding proteins (MetN), two transmembrane proteins (MetI) and a solute-binding protein (MetQ).

The protein resides in the cell membrane. It catalyses the reaction L-methionine(out) + ATP + H2O = L-methionine(in) + ADP + phosphate + H(+). The catalysed reaction is D-methionine(out) + ATP + H2O = D-methionine(in) + ADP + phosphate + H(+). Part of the ABC transporter complex MetNIQ involved in methionine import. Responsible for energy coupling to the transport system. The polypeptide is Methionine import ATP-binding protein MetN 1 (Staphylococcus aureus (strain MRSA252)).